The chain runs to 369 residues: S-(hydroxymethyl)glutathione dehydrogenase (369 aa).

Positions 40, 62, 92, 95, 98, 106, and 169 each coordinate Zn(2+).

It belongs to the zinc-containing alcohol dehydrogenase family. Class-III subfamily. As to quaternary structure, homodimer. Zn(2+) serves as cofactor.

The protein resides in the cytoplasm. The catalysed reaction is S-(hydroxymethyl)glutathione + NADP(+) = S-formylglutathione + NADPH + H(+). The enzyme catalyses S-(hydroxymethyl)glutathione + NAD(+) = S-formylglutathione + NADH + H(+). It carries out the reaction a primary alcohol + NAD(+) = an aldehyde + NADH + H(+). It catalyses the reaction a secondary alcohol + NAD(+) = a ketone + NADH + H(+). The catalysed reaction is S-nitrosoglutathione + NADH + H(+) = S-(hydroxysulfenamide)glutathione + NAD(+). In terms of biological role, has high formaldehyde dehydrogenase activity in the presence of glutathione and catalyzes the oxidation of normal alcohols in a reaction that is not GSH-dependent. In addition, hemithiolacetals other than those formed from GSH, including omega-thiol fatty acids, also are substrates. Also acts as a S-nitroso-glutathione reductase by catalyzing the NADH-dependent reduction of S-nitrosoglutathione. The chain is S-(hydroxymethyl)glutathione dehydrogenase (frmA) from Synechocystis sp. (strain ATCC 27184 / PCC 6803 / Kazusa).